We begin with the raw amino-acid sequence, 57 residues long: MPLIQPPLYLTFLLLMLLYRIITLYVWSLSTITYKTSVRHASLYQRSFFRWSVDHSL.

Over 1–8 the chain is Virion surface; sequence MPLIQPPL. The chain crosses the membrane as a helical span at residues 9-29; the sequence is YLTFLLLMLLYRIITLYVWSL. Residues 30–57 are Intravirion-facing; sequence STITYKTSVRHASLYQRSFFRWSVDHSL.

It belongs to the rubulavirus small hydrophobic protein family. In terms of assembly, interacts with host TNFRSF1A, RIPK1 and IRAK1; these interactions interfere with host NF-kappa-B activation at the level of receptor complexes. Interacts with host protein UBQLN4.

The protein localises to the virion membrane. It localises to the host cell membrane. In terms of biological role, plays a role in the inhibition of the host NF-kappa-B pathway. This inhibition occurs at the receptor level, by preventing the signaling of TNFR1 as well as IL-1R and TLR3. The polypeptide is Small hydrophobic protein (SH) (Homo sapiens (Human)).